The primary structure comprises 303 residues: Diacylglycerol kinase (303 aa).

The region spanning 1–132 (MKRARIIYNP…IDIGQVNGQY (132 aa)) is the DAGKc domain. Residues 9–13 (NPTSG), Thr40, 66–72 (GDGTINE), and Thr93 contribute to the ATP site. Residues Ser213, Asp216, and Met218 each contribute to the Mg(2+) site. Catalysis depends on Glu273, which acts as the Proton acceptor.

The protein belongs to the diacylglycerol/lipid kinase family. It depends on Mg(2+) as a cofactor.

The catalysed reaction is a 1,2-diacyl-sn-glycerol + ATP = a 1,2-diacyl-sn-glycero-3-phosphate + ADP + H(+). It carries out the reaction 1,2-di-(9Z-octadecenoyl)-sn-glycerol + ATP = 1,2-di-(9Z-octadecenoyl)-sn-glycero-3-phosphate + ADP + H(+). Its function is as follows. Catalyzes the phosphorylation of diacylglycerol (DAG) into phosphatidic acid. Is a key enzyme involved in the production of lipoteichoic acid by reintroducing DAG formed from the breakdown of membrane phospholipids into the phosphatidylglycerol biosynthetic pathway. Is more active toward long-chain DAG compared with short-chain DAG. Is not able to phosphorylate substrates other than DAG, such as monoacylglycerol, ceramide, undecaprenol, phosphatidylinositol, or sphingosine. This chain is Diacylglycerol kinase (dagK), found in Bacillus subtilis (strain 168).